Consider the following 351-residue polypeptide: Phosphatidylinositol transfer protein PDR16 (351 aa).

The region spanning 135-295 (LVAVENESGK…LYGGDLKFKY (161 aa)) is the CRAL-TRIO domain.

In terms of assembly, homodimer. Apo-SFH3 forms a dimer through the hydrophobic interaction of gating helices. Binding of phosphatidylinositol leads to dissociation of the dimer into monomers in a reversible manner.

Its subcellular location is the lipid droplet. The protein resides in the microsome membrane. It localises to the endoplasmic reticulum membrane. It catalyses the reaction a 1,2-diacyl-sn-glycero-3-phospho-(1D-myo-inositol)(in) = a 1,2-diacyl-sn-glycero-3-phospho-(1D-myo-inositol)(out). Has phosphatidylinositol transfer activity. Involved in the regulation of the phospholipid composition of plasma- and endomembranes. Altering plasma membrane composition may provide a possible mechanism for multidrug resistance. Involved in the regulation of sterol biosynthesis. Contributes to efficient phospholipase D1 activation in the regulation of phospholipid turnover. Regulates the release of fatty acids from lipid droplets. This Saccharomyces cerevisiae (strain ATCC 204508 / S288c) (Baker's yeast) protein is Phosphatidylinositol transfer protein PDR16 (PDR16).